Consider the following 160-residue polypeptide: S-ribosylhomocysteine lyase (160 aa).

Residues His57, His61, and Cys127 each contribute to the Fe cation site.

It belongs to the LuxS family. In terms of assembly, homodimer. Requires Fe cation as cofactor.

It carries out the reaction S-(5-deoxy-D-ribos-5-yl)-L-homocysteine = (S)-4,5-dihydroxypentane-2,3-dione + L-homocysteine. Involved in the synthesis of autoinducer 2 (AI-2) which is secreted by bacteria and is used to communicate both the cell density and the metabolic potential of the environment. The regulation of gene expression in response to changes in cell density is called quorum sensing. Catalyzes the transformation of S-ribosylhomocysteine (RHC) to homocysteine (HC) and 4,5-dihydroxy-2,3-pentadione (DPD). This chain is S-ribosylhomocysteine lyase, found in Streptococcus thermophilus (strain CNRZ 1066).